We begin with the raw amino-acid sequence, 346 residues long: Cytidine deaminase 5 (346 aa).

2 CMP/dCMP-type deaminase domains span residues 20 to 148 (TDHK…FGSE) and 183 to 304 (DLCS…ITGA). Substrate is bound at residue 58–60 (NVE). Residue histidine 71 coordinates Zn(2+). Catalysis depends on glutamate 73, which acts as the Proton donor. Residues cysteine 104 and cysteine 107 each coordinate Zn(2+).

Belongs to the cytidine and deoxycytidylate deaminase family. As to quaternary structure, homodimer. Zn(2+) is required as a cofactor.

It carries out the reaction cytidine + H2O + H(+) = uridine + NH4(+). The enzyme catalyses 2'-deoxycytidine + H2O + H(+) = 2'-deoxyuridine + NH4(+). In terms of biological role, this enzyme scavenges exogenous and endogenous cytidine and 2'-deoxycytidine for UMP synthesis. This chain is Cytidine deaminase 5 (CDA5), found in Arabidopsis thaliana (Mouse-ear cress).